Here is a 117-residue protein sequence, read N- to C-terminus: Galanin peptides (117 aa).

An N-terminal signal peptide occupies residues 1–19 (MQRCAGFLFLSLILCAALS). The propeptide occupies 20-30 (ETFGLVLSAKE). Residue threonine 61 is modified to Threonine amide.

This sequence belongs to the galanin family.

The protein localises to the secreted. In terms of biological role, endocrine hormone of the central and peripheral nervous systems that binds and activates the G protein-coupled receptors GALR1, GALR2, and GALR3. This small neuropeptide may regulate diverse physiologic functions including contraction of smooth muscle of the gastrointestinal and genitourinary tract, growth hormone and insulin release and adrenal secretion. This chain is Galanin peptides (GAL), found in Coturnix japonica (Japanese quail).